The chain runs to 183 residues: NAD(P)H-quinone oxidoreductase subunit I, chloroplastic (183 aa).

2 consecutive 4Fe-4S ferredoxin-type domains span residues 55-84 and 95-124; these read GRIH…VDWK and KSYS…MTEE. The [4Fe-4S] cluster site is built by C64, C67, C70, C74, C104, C107, C110, and C114.

Belongs to the complex I 23 kDa subunit family. In terms of assembly, NDH is composed of at least 16 different subunits, 5 of which are encoded in the nucleus. The cofactor is [4Fe-4S] cluster.

It localises to the plastid. Its subcellular location is the chloroplast thylakoid membrane. The enzyme catalyses a plastoquinone + NADH + (n+1) H(+)(in) = a plastoquinol + NAD(+) + n H(+)(out). It catalyses the reaction a plastoquinone + NADPH + (n+1) H(+)(in) = a plastoquinol + NADP(+) + n H(+)(out). Functionally, NDH shuttles electrons from NAD(P)H:plastoquinone, via FMN and iron-sulfur (Fe-S) centers, to quinones in the photosynthetic chain and possibly in a chloroplast respiratory chain. The immediate electron acceptor for the enzyme in this species is believed to be plastoquinone. Couples the redox reaction to proton translocation, and thus conserves the redox energy in a proton gradient. This Anthoceros angustus (Hornwort) protein is NAD(P)H-quinone oxidoreductase subunit I, chloroplastic.